The following is a 774-amino-acid chain: MRSGGNKYLASLLRCYRDERCKLSGKVIHGFIVRMGMKSDTYLCNRLLDLYIECGDGDYARKVFDEMSVRDVYSWNAFLTFRCKVGDLGEACEVFDGMPERDVVSWNNMISVLVRKGFEEKALVVYKRMVCDGFLPSRFTLASVLSACSKVLDGVFGMRCHGVAVKTGLDKNIFVGNALLSMYAKCGFIVDYGVRVFESLSQPNEVSYTAVIGGLARENKVLEAVQMFRLMCEKGVQVDSVCLSNILSISAPREGCDSLSEIYGNELGKQIHCLALRLGFGGDLHLNNSLLEIYAKNKDMNGAELIFAEMPEVNVVSWNIMIVGFGQEYRSDKSVEFLTRMRDSGFQPNEVTCISVLGACFRSGDVETGRRIFSSIPQPSVSAWNAMLSGYSNYEHYEEAISNFRQMQFQNLKPDKTTLSVILSSCARLRFLEGGKQIHGVVIRTEISKNSHIVSGLIAVYSECEKMEISECIFDDCINELDIACWNSMISGFRHNMLDTKALILFRRMHQTAVLCPNETSFATVLSSCSRLCSLLHGRQFHGLVVKSGYVSDSFVETALTDMYCKCGEIDSARQFFDAVLRKNTVIWNEMIHGYGHNGRGDEAVGLYRKMISSGEKPDGITFVSVLTACSHSGLVETGLEILSSMQRIHGIEPELDHYICIVDCLGRAGRLEDAEKLAEATPYKSSSVLWEILLSSCRVHGDVSLARRVAEKLMRLDPQSSAAYVLLSNTYSSLRQWDDSAALQGLMNKNRVHKTPGQSWTTYGNDLDSGFRK.

20 PPR repeats span residues 5–39 (GNKY…GMKS), 40–70 (DTYL…MSVR), 71–101 (DVYS…MPER), 102–136 (DVVS…GFLP), 137–171 (SRFT…GLDK), 172–203 (NIFV…LSQP), 204–238 (NEVS…GVQV), 239–270 (DSVC…LGKQ), 283–313 (DLHL…MPEV), 314–348 (NVVS…GFQP), 349–379 (NEVT…IPQP), 380–414 (SVSA…NLKP), 415–449 (DKTT…EISK), 450–480 (NSHI…CINE), 482–516 (DIAC…AVLC), 518–552 (NETS…GYVS), 553–583 (DSFV…VLRK), 584–618 (NTVI…GEKP), 619–654 (DGIT…GIEP), and 655–685 (ELDH…TPYK). Residues 690 to 765 (LWEILLSSCR…TPGQSWTTYG (76 aa)) are type E motif.

This sequence belongs to the PPR family. PCMP-E subfamily.

This Arabidopsis thaliana (Mouse-ear cress) protein is Pentatricopeptide repeat-containing protein At4g20770 (PCMP-E35).